A 453-amino-acid chain; its full sequence is ACT domain-containing protein ACR3 (453 aa).

ACT domains lie at 37–112 (LVKV…SASQ), 130–212 (SIEI…KFAR), 266–341 (VINV…RVSE), and 344–423 (SLEL…VPSR).

As to expression, expressed in roots, cotyledons, rosette and cauline leaves, sepals, style, and pedicels and tips of young developing siliques.

Functionally, may bind amino acids. This Arabidopsis thaliana (Mouse-ear cress) protein is ACT domain-containing protein ACR3.